The sequence spans 323 residues: tRNA U34 carboxymethyltransferase (323 aa).

Carboxy-S-adenosyl-L-methionine contacts are provided by residues lysine 91, tryptophan 105, lysine 110, glycine 130, 152-154 (DPT), 181-182 (IE), methionine 196, tyrosine 200, and arginine 315.

It belongs to the class I-like SAM-binding methyltransferase superfamily. CmoB family. As to quaternary structure, homotetramer.

It catalyses the reaction carboxy-S-adenosyl-L-methionine + 5-hydroxyuridine(34) in tRNA = 5-carboxymethoxyuridine(34) in tRNA + S-adenosyl-L-homocysteine + H(+). In terms of biological role, catalyzes carboxymethyl transfer from carboxy-S-adenosyl-L-methionine (Cx-SAM) to 5-hydroxyuridine (ho5U) to form 5-carboxymethoxyuridine (cmo5U) at position 34 in tRNAs. The polypeptide is tRNA U34 carboxymethyltransferase (Shigella boydii serotype 18 (strain CDC 3083-94 / BS512)).